Here is a 77-residue protein sequence, read N- to C-terminus: Large ribosomal subunit protein bL28 (77 aa).

Residues 1–25 form a disordered region; that stretch reads MARVCQVTGKAPMSGNNVSHANNKT.

Belongs to the bacterial ribosomal protein bL28 family.

This Paraburkholderia xenovorans (strain LB400) protein is Large ribosomal subunit protein bL28.